A 386-amino-acid chain; its full sequence is MKIHEYQGKEILRNFGVPVPRGIPAFTVQEAVEAAQKLGGPVWVVKAQIHAGGRGKGGGVKVAKTIDDVKRIAGEILGMQLKTHQTGPEGQKVRRLYIEDGADIQKEYYVSAVTDRESQKVAFIASSEGGMDIEEVAHSNPEKIIKVFVDPLVGMTDAQAKEVAAGIGMPADSVAQTVDVLQKLYKCYMETDASLVEINPLNRNSKGEIMALDAKFNFDANALFRHPEIVAYRDLDEEDPAEVEASKFDLAYISLDGNIGCLVNGAGLAMATMDTIKLFGGEPANFLDVGGGATAEKVTEAFKIMLKNPEVKGILVNIFGGIMKCDTIADGVITACKAVNLSVPLVVRMKGTNEDLGKKMLADSGLPIIAADTMAEAATKIVAAVK.

An ATP-grasp domain is found at 9–244 (KEILRNFGVP…LDEEDPAEVE (236 aa)). Residues Lys46, 53-55 (GRG), Glu99, Ala102, and Glu107 each bind ATP. Residues Asn199 and Asp213 each coordinate Mg(2+). Residues Asn264 and 321 to 323 (GIM) contribute to the substrate site.

This sequence belongs to the succinate/malate CoA ligase beta subunit family. In terms of assembly, heterotetramer of two alpha and two beta subunits. Mg(2+) serves as cofactor.

The catalysed reaction is succinate + ATP + CoA = succinyl-CoA + ADP + phosphate. It carries out the reaction GTP + succinate + CoA = succinyl-CoA + GDP + phosphate. Its pathway is carbohydrate metabolism; tricarboxylic acid cycle; succinate from succinyl-CoA (ligase route): step 1/1. Functionally, succinyl-CoA synthetase functions in the citric acid cycle (TCA), coupling the hydrolysis of succinyl-CoA to the synthesis of either ATP or GTP and thus represents the only step of substrate-level phosphorylation in the TCA. The beta subunit provides nucleotide specificity of the enzyme and binds the substrate succinate, while the binding sites for coenzyme A and phosphate are found in the alpha subunit. This is Succinate--CoA ligase [ADP-forming] subunit beta from Polaromonas sp. (strain JS666 / ATCC BAA-500).